The chain runs to 190 residues: Small ribosomal subunit protein uS5 (190 aa).

In terms of domain architecture, S5 DRBM spans 19–82 (IIDKLVTINR…ERAKRSMIRV (64 aa)). Positions 161–190 (SVASRRGKKVSDILGRREPVAGQEGEEAHA) are disordered. Residues 169-179 (KVSDILGRREP) are compositionally biased toward basic and acidic residues.

Belongs to the universal ribosomal protein uS5 family. As to quaternary structure, part of the 30S ribosomal subunit. Contacts proteins S4 and S8.

In terms of biological role, with S4 and S12 plays an important role in translational accuracy. Located at the back of the 30S subunit body where it stabilizes the conformation of the head with respect to the body. The sequence is that of Small ribosomal subunit protein uS5 from Granulibacter bethesdensis (strain ATCC BAA-1260 / CGDNIH1).